The following is a 1166-amino-acid chain: MKRAFVTVGTTSFDELVARVVANDCVQILESLGYNHLVLQVGRGTVVPKPFRTESFTLDVYRYKDSLKEDLQQADLVISHAGAGSCLESLEKGKPLVVVVNEKLMNNHQFELAKQLHKEGHLFYCTCRVLSCPAPVSLLLVLLGSAKILQQLPSATLSCFGYLPTQAPVLVATAYSYLHSVFSSFPPLSTFLIIPCTMQKGWKKYCGQKSLNEASMDEYLGSLGLFRKVVAKDASCLFRAISEQLFHSQIHHLQIRRACVSYMKENQQAFESYVEGSFEKYLERLGDPKESAGQLELKALSLIYNRDFIIYRYPGKPPTQVTDNGFEDKIILCYSNNGHYDSVYSKEFQSTAGICQAILYELLYKDVFVVDEETLKTAVDLFRSGSRRNKHHALTASVEGSSDQKSSTEDRTEEAAACSSAASTPEGNKQGTERQKVPESPSKMLFPYKVLKALDPEIYRNVEFDAWLDSRKELQKSECVEYGGRYYFLGDKCQVCMESGGKYYNAHIQEIDNDKSSVVVFIEEFAERHSIPLAHVRPVNQVALLPSWNAIPIRNGRGYPTITGGYFPEIVMTDMNMKQRKKMFKKFRGKEIYMTMAYSRGDPLVPSRIQHSMHYGHDPLLYYSQTAGHILSSQHFYPQHSSQRQGRGYGMPRDSSHLISKQNLPNPKVGFCSGSGRKCCQSYDNVSYRSRSFRRSHRQMHCMNKGCQYGFAPENGVEETVTFYALEEGNETAYSTLPNNGGPTTMVPATSGYCVARQGYNSCKPPLNSGDSNDHCDNGGYHGDYLYSSEQGYETSSVYTTTVSTANLSLQDSGPSSVPQDTVTSYNYPQKVLENSAAIAVSWASHVPVPVIPNCAGDNEALRTSDISSQNAIQPGFVPPPAQGSPAYLEPSAAGAAGAAAAAAAAAAPVATPVAAPLPLPPPLPPPPPATLEAGDASGFPLPPPPPPPPPPPPPYSYDPSGSDLPQDTKVLQYYFNLGLQCYHHNYWHPMVYMPHVQQQLQPQPQPQPQPQPQPQPQPQPQPQQPQQQQPPPQQQQQQQEQVHGESYPDCTEQPLVDQSAPQVYSDVVREDGTQADVSTNDTFPIADAVPLPHGAVYYPVMTDPYGSPLLGFDSYVPVASDYSSIAMWHPVNAACGASAQIHGAMNPGPIGYMLLPNSPHYTPQN.

A glycosyltransferase activity region spans residues 1-125; it reads MKRAFVTVGT…LHKEGHLFYC (125 aa). Residues 126-394 form a deubiquitinase activity region; sequence TCRVLSCPAP…GSRRNKHHAL (269 aa). Residues 225-346 form the OTU domain; the sequence is LFRKVVAKDA…NGHYDSVYSK (122 aa). The active-site For deubiquitinase activity is Asp-233. The Nucleophile; for deubiquitinase activity role is filled by Cys-236. His-339 (for deubiquitinase activity) is an active-site residue. A disordered region spans residues 393 to 438; that stretch reads ALTASVEGSSDQKSSTEDRTEEAAACSSAASTPEGNKQGTERQKVP. One can recognise a Tudor domain in the interval 486–546; that stretch reads YYFLGDKCQV…RPVNQVALLP (61 aa). Pro residues-rich tracts occupy residues 921–930, 941–957, and 1004–1034; these read PPPLPPPPPA, PLPP…PPYS, and QPQP…PPPQ. 2 disordered regions span residues 921–966 and 998–1056; these read PPPL…SDLP and QQQL…EQPL.

This sequence belongs to the glycosyltransferase 28 family. Forms with ALG14 the active heterodimeric UDP-N-acetylglucosamine transferase complex. In terms of assembly, not able to interact with ALG14 to form an active UDP-N-acetylglucosamine transferase complex.

It is found in the endoplasmic reticulum membrane. The catalysed reaction is an N-acetyl-alpha-D-glucosaminyl-diphospho-di-trans,poly-cis-dolichol + UDP-N-acetyl-alpha-D-glucosamine = an N,N'-diacetylchitobiosyl-diphospho-di-trans,poly-cis-dolichol + UDP + H(+). It participates in protein modification; protein glycosylation. Functionally, catalytic subunit of the UDP-N-acetylglucosamine transferase complex that operates in the biosynthetic pathway of dolichol-linked oligosaccharides, the glycan precursors employed in protein asparagine (N)-glycosylation. The assembly of dolichol-linked oligosaccharides begins on the cytosolic side of the endoplasmic reticulum membrane and finishes in its lumen. The sequential addition of sugars to dolichol pyrophosphate produces dolichol-linked oligosaccharides containing fourteen sugars, including two GlcNAcs, nine mannoses and three glucoses. Once assembled, the oligosaccharide is transferred from the lipid to nascent proteins by oligosaccharyltransferases. On the cytoplasmic face of the endoplasmic reticulum, the dimeric ALG13/ALG14 complex catalyzes the second step of dolichol pyrophosphate biosynthesis, transferring a beta1,4-linked N-acetylglucosamine (GlcNAc) from UDP-GlcNAc to GlcNAc-pyrophosphatedolichol (Gn-PDol) to produce N,N'-diacetylchitobiosyl diphosphodolichol. N,N'-diacetylchitobiosyl diphosphodolichol is a substrate for ALG1, the following enzyme in the biosynthetic pathway. In terms of biological role, no glycosyltransferase or deubiquitinase activity is detected for this potential multifunctional enzyme. The chain is UDP-N-acetylglucosamine transferase subunit ALG13 from Mus musculus (Mouse).